Reading from the N-terminus, the 148-residue chain is 3-hydroxyacyl-[acyl-carrier-protein] dehydratase FabZ (148 aa).

Residue His48 is part of the active site.

The protein belongs to the thioester dehydratase family. FabZ subfamily.

The protein resides in the cytoplasm. It carries out the reaction a (3R)-hydroxyacyl-[ACP] = a (2E)-enoyl-[ACP] + H2O. Involved in unsaturated fatty acids biosynthesis. Catalyzes the dehydration of short chain beta-hydroxyacyl-ACPs and long chain saturated and unsaturated beta-hydroxyacyl-ACPs. This chain is 3-hydroxyacyl-[acyl-carrier-protein] dehydratase FabZ, found in Campylobacter curvus (strain 525.92).